The following is a 279-amino-acid chain: Coiled-coil domain-containing protein 117 (279 aa).

The tract at residues 1–82 is disordered; the sequence is MAALGRPFSG…REEEEDDDCP (82 aa). Omega-N-methylarginine is present on arginine 48. Phosphoserine is present on serine 53. A compositionally biased stretch (basic residues) spans 63 to 72; sequence VSVHCKKKHK. A coiled-coil region spans residues 141–168; it reads QCEVARRKLQEIEDRIIDEDEEVEADRN. Residues 217–279 form a disordered region; sequence LLSDKPKPSS…ATSTEEEMEL (63 aa). 2 stretches are compositionally biased toward polar residues: residues 224 to 235 and 262 to 272; these read PSSNTKNYTGES and SLYNSLETATS.

Interacts with CIAO2B; the interaction is direct. Interacts with MMS19; the interaction is indirect.

Its subcellular location is the cytoplasm. It is found in the cytoskeleton. The protein resides in the spindle. The protein localises to the nucleus. In terms of biological role, facilitates DNA repair, cell cycle progression, and cell proliferation through its interaction with CIAO2B. The polypeptide is Coiled-coil domain-containing protein 117 (Homo sapiens (Human)).